Consider the following 345-residue polypeptide: Glycerol-3-phosphate dehydrogenase [NAD(P)+] (345 aa).

4 residues coordinate NADPH: Ser-23, Tyr-24, His-44, and Lys-118. The sn-glycerol 3-phosphate site is built by Lys-118, Gly-147, and Thr-149. Ala-151 contributes to the NADPH binding site. Positions 203, 256, 266, 267, and 268 each coordinate sn-glycerol 3-phosphate. Catalysis depends on Lys-203, which acts as the Proton acceptor. Arg-267 contributes to the NADPH binding site. Residues Val-291 and Glu-293 each coordinate NADPH.

Belongs to the NAD-dependent glycerol-3-phosphate dehydrogenase family.

It localises to the cytoplasm. The catalysed reaction is sn-glycerol 3-phosphate + NAD(+) = dihydroxyacetone phosphate + NADH + H(+). It carries out the reaction sn-glycerol 3-phosphate + NADP(+) = dihydroxyacetone phosphate + NADPH + H(+). The protein operates within membrane lipid metabolism; glycerophospholipid metabolism. In terms of biological role, catalyzes the reduction of the glycolytic intermediate dihydroxyacetone phosphate (DHAP) to sn-glycerol 3-phosphate (G3P), the key precursor for phospholipid synthesis. The polypeptide is Glycerol-3-phosphate dehydrogenase [NAD(P)+] (Vibrio vulnificus (strain CMCP6)).